Here is a 151-residue protein sequence, read N- to C-terminus: Small ribosomal subunit protein uS15 (151 aa).

The protein belongs to the universal ribosomal protein uS15 family.

This is Small ribosomal subunit protein uS15 (RPS13) from Agaricus bisporus (White button mushroom).